We begin with the raw amino-acid sequence, 727 residues long: Phosphoribosylformylglycinamidine synthase subunit PurL (727 aa).

Residue His-47 is part of the active site. Positions 50 and 89 each coordinate ATP. Glu-91 contacts Mg(2+). Substrate contacts are provided by residues 92 to 95 and Arg-114; that span reads SHNH. The active-site Proton acceptor is the His-93. Asp-115 serves as a coordination point for Mg(2+). Gln-238 contributes to the substrate binding site. Asp-266 lines the Mg(2+) pocket. 310–312 serves as a coordination point for substrate; the sequence is ESQ. Residues Asp-490 and Gly-527 each coordinate ATP. Asn-528 contributes to the Mg(2+) binding site. Residue Ser-530 coordinates substrate.

It belongs to the FGAMS family. In terms of assembly, monomer. Part of the FGAM synthase complex composed of 1 PurL, 1 PurQ and 2 PurS subunits.

It localises to the cytoplasm. It carries out the reaction N(2)-formyl-N(1)-(5-phospho-beta-D-ribosyl)glycinamide + L-glutamine + ATP + H2O = 2-formamido-N(1)-(5-O-phospho-beta-D-ribosyl)acetamidine + L-glutamate + ADP + phosphate + H(+). It participates in purine metabolism; IMP biosynthesis via de novo pathway; 5-amino-1-(5-phospho-D-ribosyl)imidazole from N(2)-formyl-N(1)-(5-phospho-D-ribosyl)glycinamide: step 1/2. Functionally, part of the phosphoribosylformylglycinamidine synthase complex involved in the purines biosynthetic pathway. Catalyzes the ATP-dependent conversion of formylglycinamide ribonucleotide (FGAR) and glutamine to yield formylglycinamidine ribonucleotide (FGAM) and glutamate. The FGAM synthase complex is composed of three subunits. PurQ produces an ammonia molecule by converting glutamine to glutamate. PurL transfers the ammonia molecule to FGAR to form FGAM in an ATP-dependent manner. PurS interacts with PurQ and PurL and is thought to assist in the transfer of the ammonia molecule from PurQ to PurL. The polypeptide is Phosphoribosylformylglycinamidine synthase subunit PurL (Acidiphilium cryptum (strain JF-5)).